Reading from the N-terminus, the 626-residue chain is Glutamine--fructose-6-phosphate aminotransferase [isomerizing] (626 aa).

C2 acts as the Nucleophile; for GATase activity in catalysis. Residues 2 to 222 (CGIVGYIGPQ…NGELARLTPT (221 aa)) enclose the Glutamine amidotransferase type-2 domain. SIS domains follow at residues 293–441 (LPPS…QRQS) and 471–616 (YIEA…VDQP). K621 (for Fru-6P isomerization activity) is an active-site residue.

In terms of assembly, homodimer.

The protein localises to the cytoplasm. It catalyses the reaction D-fructose 6-phosphate + L-glutamine = D-glucosamine 6-phosphate + L-glutamate. Its function is as follows. Catalyzes the first step in hexosamine metabolism, converting fructose-6P into glucosamine-6P using glutamine as a nitrogen source. The protein is Glutamine--fructose-6-phosphate aminotransferase [isomerizing] of Thermosynechococcus vestitus (strain NIES-2133 / IAM M-273 / BP-1).